Here is a 524-residue protein sequence, read N- to C-terminus: Alkaline phosphatase, tissue-nonspecific isozyme (524 aa).

A signal peptide spans 1-17; that stretch reads MISPFLLLAIGTCFASS. Residue Asp-60 coordinates Mg(2+). Zn(2+)-binding residues include Asp-60 and Ser-110. The active-site Phosphoserine intermediate is Ser-110. Phosphoserine is present on Ser-110. Residues Cys-139 and Cys-201 are joined by a disulfide bond. Asn-140 carries N-linked (GlcNAc...) asparagine glycosylation. Position 173 (Thr-173) interacts with Mg(2+). The N-linked (GlcNAc...) asparagine glycan is linked to Asn-230. Glu-235 contributes to the Ca(2+) binding site. Residue Asn-271 is glycosylated (N-linked (GlcNAc...) asparagine). Phe-290 and Glu-291 together coordinate Ca(2+). The N-linked (GlcNAc...) asparagine glycan is linked to Asn-303. Residue Asp-306 coordinates Ca(2+). Glu-332 is a Mg(2+) binding site. Zn(2+) is bound by residues Asp-337, His-341, Asp-378, and His-379. N-linked (GlcNAc...) asparagine glycosylation occurs at Asn-430. His-454 lines the Zn(2+) pocket. Cys-489 and Cys-497 are joined by a disulfide. Ser-499 is lipidated: GPI-anchor amidated serine. Positions 500-524 are cleaved as a propeptide — removed in mature form; it reads ASSSGSPSPGPLLLLLALLPLGSLF.

The protein belongs to the alkaline phosphatase family. In terms of assembly, homodimer. Mg(2+) is required as a cofactor. The cofactor is Zn(2+). It depends on Ca(2+) as a cofactor. In terms of processing, N-glycosylated.

It is found in the cell membrane. The protein resides in the extracellular vesicle membrane. It localises to the mitochondrion membrane. The protein localises to the mitochondrion intermembrane space. The catalysed reaction is a phosphate monoester + H2O = an alcohol + phosphate. It carries out the reaction diphosphate + H2O = 2 phosphate + H(+). It catalyses the reaction pyridoxal 5'-phosphate + H2O = pyridoxal + phosphate. The enzyme catalyses phosphoethanolamine + H2O = ethanolamine + phosphate. The catalysed reaction is N-phosphocreatine + H2O = creatine + phosphate. It carries out the reaction ATP + H2O = ADP + phosphate + H(+). It catalyses the reaction ADP + H2O = AMP + phosphate + H(+). The enzyme catalyses AMP + H2O = adenosine + phosphate. Phosphatase activity is specifically inhibited by 5-((5-chloro-2-methoxyphenyl)sulfonamido)nicotinamide (SBI-425). Alkaline phosphatase that metabolizes various phosphate compounds and plays a key role in skeletal mineralization and adaptive thermogenesis. Has broad substrate specificity and can hydrolyze a considerable variety of compounds: however, only a few substrates, such as diphosphate (inorganic pyrophosphate; PPi), pyridoxal 5'-phosphate (PLP) and N-phosphocreatine are natural substrates. Plays an essential role in skeletal and dental mineralization via its ability to hydrolyze extracellular diphosphate, a potent mineralization inhibitor, to phosphate: it thereby promotes hydroxyapatite crystal formation and increases inorganic phosphate concentration. Acts in a non-redundant manner with PHOSPHO1 in skeletal mineralization: while PHOSPHO1 mediates the initiation of hydroxyapatite crystallization in the matrix vesicles (MVs), ALPL/TNAP catalyzes the spread of hydroxyapatite crystallization in the extracellular matrix. Also promotes dephosphorylation of osteopontin (SSP1), an inhibitor of hydroxyapatite crystallization in its phosphorylated state; it is however unclear whether ALPL/TNAP mediates SSP1 dephosphorylation via a direct or indirect manner. Catalyzes dephosphorylation of PLP to pyridoxal (PL), the transportable form of vitamin B6, in order to provide a sufficient amount of PLP in the brain, an essential cofactor for enzymes catalyzing the synthesis of diverse neurotransmitters. Additionally, also able to mediate ATP degradation in a stepwise manner to adenosine, thereby regulating the availability of ligands for purinergic receptors. Also capable of dephosphorylating microbial products, such as lipopolysaccharides (LPS) as well as other phosphorylated small-molecules, such as poly-inosine:cytosine (poly I:C). Acts as a key regulator of adaptive thermogenesis as part of the futile creatine cycle: localizes to the mitochondria of thermogenic fat cells and acts by mediating hydrolysis of N-phosphocreatine to initiate a futile cycle of creatine dephosphorylation and phosphorylation. During the futile creatine cycle, creatine and N-phosphocreatine are in a futile cycle, which dissipates the high energy charge of N-phosphocreatine as heat without performing any mechanical or chemical work. This is Alkaline phosphatase, tissue-nonspecific isozyme (ALPL) from Bos taurus (Bovine).